The sequence spans 254 residues: 3-dehydroquinate dehydratase (254 aa).

Residues 47 to 49 (EFR) and Arg-83 each bind 3-dehydroquinate. His-144 (proton donor/acceptor) is an active-site residue. Lys-171 (schiff-base intermediate with substrate) is an active-site residue. The 3-dehydroquinate site is built by Arg-213, Ser-232, and Gln-236.

Belongs to the type-I 3-dehydroquinase family. Homodimer.

It carries out the reaction 3-dehydroquinate = 3-dehydroshikimate + H2O. It functions in the pathway metabolic intermediate biosynthesis; chorismate biosynthesis; chorismate from D-erythrose 4-phosphate and phosphoenolpyruvate: step 3/7. Functionally, involved in the third step of the chorismate pathway, which leads to the biosynthesis of aromatic amino acids. Catalyzes the cis-dehydration of 3-dehydroquinate (DHQ) and introduces the first double bond of the aromatic ring to yield 3-dehydroshikimate. The protein is 3-dehydroquinate dehydratase of Neisseria meningitidis serogroup C / serotype 2a (strain ATCC 700532 / DSM 15464 / FAM18).